We begin with the raw amino-acid sequence, 199 residues long: Dephospho-CoA kinase (199 aa).

The region spanning 4-199 is the DPCK domain; that stretch reads VIGLTGGIAS…DNVLQKWNIS (196 aa). 12 to 17 is a binding site for ATP; sequence ASGKST.

The protein belongs to the CoaE family.

Its subcellular location is the cytoplasm. The enzyme catalyses 3'-dephospho-CoA + ATP = ADP + CoA + H(+). Its pathway is cofactor biosynthesis; coenzyme A biosynthesis; CoA from (R)-pantothenate: step 5/5. In terms of biological role, catalyzes the phosphorylation of the 3'-hydroxyl group of dephosphocoenzyme A to form coenzyme A. The polypeptide is Dephospho-CoA kinase (Oceanobacillus iheyensis (strain DSM 14371 / CIP 107618 / JCM 11309 / KCTC 3954 / HTE831)).